The chain runs to 266 residues: Undecaprenyl-diphosphatase (266 aa).

8 helical membrane passes run 1 to 21 (METF…FLPI), 39 to 59 (QGLS…VIYF), 87 to 107 (WWII…KDFI), 111 to 131 (FRNT…LWAA), 144 to 164 (MGWK…IPGT), 183 to 203 (AAAR…ALLV), 218 to 238 (ALGL…HFFL), and 244 to 264 (IGMT…LGLL).

It belongs to the UppP family.

The protein resides in the cell inner membrane. It catalyses the reaction di-trans,octa-cis-undecaprenyl diphosphate + H2O = di-trans,octa-cis-undecaprenyl phosphate + phosphate + H(+). Catalyzes the dephosphorylation of undecaprenyl diphosphate (UPP). Confers resistance to bacitracin. The protein is Undecaprenyl-diphosphatase of Shewanella frigidimarina (strain NCIMB 400).